A 218-amino-acid chain; its full sequence is MATHSPCIVIGDDEQGYDLDLFCIPKHYADDLEKVYIPHGLIMDRTERLAREIMKGMGGHHIVALCVLKGGYKFFADLLDYIKALNRNSDKSIPMTVDFIRLKSYCNDQSTGDIKVIGGDDLSTLTGKNVLIVEDIIDTGKTMKTLLSLLKQYNPKMVKVASLLVKRTPRSVGYRPDFVGFEVPDKFVVGYALDYNEYFRDLNHICVISETGKQKYKA.

GMP is bound by residues Lys-69, 134–142 (EDIIDTGKT), Lys-166, 186–188 (KFV), and Asp-194. Asp-138 acts as the Proton acceptor in catalysis. Asp-194 serves as a coordination point for Mg(2+).

Belongs to the purine/pyrimidine phosphoribosyltransferase family. As to quaternary structure, homotetramer. The cofactor is Mg(2+).

The protein localises to the cytoplasm. The enzyme catalyses IMP + diphosphate = hypoxanthine + 5-phospho-alpha-D-ribose 1-diphosphate. It catalyses the reaction GMP + diphosphate = guanine + 5-phospho-alpha-D-ribose 1-diphosphate. It functions in the pathway purine metabolism; IMP biosynthesis via salvage pathway; IMP from hypoxanthine: step 1/1. Converts guanine to guanosine monophosphate, and hypoxanthine to inosine monophosphate. Transfers the 5-phosphoribosyl group from 5-phosphoribosylpyrophosphate onto the purine. Plays a central role in the generation of purine nucleotides through the purine salvage pathway. This is Hypoxanthine-guanine phosphoribosyltransferase (HPRT1) from Gallus gallus (Chicken).